The following is a 773-amino-acid chain: Ergothioneine biosynthesis protein 1 (773 aa).

Positions 16–322 (PESIEQSLKR…ESTIADYSTY (307 aa)) are L-histidine N(alpha)-methyltransferase. Tyr-51 is a binding site for L-histidine. S-adenosyl-L-methionine contacts are provided by residues Gly-85, Lys-91, Asp-112, and 142–143 (CF). L-histidine is bound by residues Asn-172, Tyr-212, and 287–289 (EES). The hercynylcysteine S-oxide synthase stretch occupies residues 347-772 (ALRKVWLFIT…YAWIGARLVK (426 aa)). Residues His-382, His-476, and His-480 each contribute to the Fe cation site.

In the N-terminal section; belongs to the methyltransferase superfamily. EgtD family. It in the C-terminal section; belongs to the EgtB family. Fe(2+) serves as cofactor.

The protein resides in the cytoplasm. Its subcellular location is the nucleus. The enzyme catalyses L-histidine + 3 S-adenosyl-L-methionine = hercynine + 3 S-adenosyl-L-homocysteine + 3 H(+). The catalysed reaction is hercynine + L-cysteine + O2 = S-(hercyn-2-yl)-L-cysteine S-oxide + H2O. It participates in amino-acid biosynthesis; ergothioneine biosynthesis. Catalyzes the SAM-dependent triple methylation of the alpha-amino group of histidine to form hercynine and subsequent conjugation with cysteine and oxygen to form hercynylcysteine sulfoxide, the first two steps in the biosynthesis pathway of ergothioneine. May play a role in meiosis. This is Ergothioneine biosynthesis protein 1 from Schizosaccharomyces pombe (strain 972 / ATCC 24843) (Fission yeast).